The sequence spans 377 residues: Bifunctional enzyme IspD/IspF (377 aa).

Residues 1 to 221 (MTTAAIIVAA…ERILRQDMDV (221 aa)) are 2-C-methyl-D-erythritol 4-phosphate cytidylyltransferase. A 2-C-methyl-D-erythritol 2,4-cyclodiphosphate synthase region spans residues 222–377 (RLGNGYDVHR…ALATACLVKP (156 aa)). A divalent metal cation is bound by residues aspartate 228 and histidine 230. Residues 228–230 (DVH) and 254–255 (HS) each bind 4-CDP-2-C-methyl-D-erythritol 2-phosphate. A divalent metal cation is bound at residue histidine 262. 4-CDP-2-C-methyl-D-erythritol 2-phosphate-binding positions include 276–278 (DIG), 352–355 (TTSE), phenylalanine 359, and arginine 362.

It in the N-terminal section; belongs to the IspD/TarI cytidylyltransferase family. IspD subfamily. In the C-terminal section; belongs to the IspF family. A divalent metal cation is required as a cofactor.

The catalysed reaction is 2-C-methyl-D-erythritol 4-phosphate + CTP + H(+) = 4-CDP-2-C-methyl-D-erythritol + diphosphate. It carries out the reaction 4-CDP-2-C-methyl-D-erythritol 2-phosphate = 2-C-methyl-D-erythritol 2,4-cyclic diphosphate + CMP. It functions in the pathway isoprenoid biosynthesis; isopentenyl diphosphate biosynthesis via DXP pathway; isopentenyl diphosphate from 1-deoxy-D-xylulose 5-phosphate: step 2/6. It participates in isoprenoid biosynthesis; isopentenyl diphosphate biosynthesis via DXP pathway; isopentenyl diphosphate from 1-deoxy-D-xylulose 5-phosphate: step 4/6. Its function is as follows. Bifunctional enzyme that catalyzes the formation of 4-diphosphocytidyl-2-C-methyl-D-erythritol from CTP and 2-C-methyl-D-erythritol 4-phosphate (MEP) (IspD), and catalyzes the conversion of 4-diphosphocytidyl-2-C-methyl-D-erythritol 2-phosphate (CDP-ME2P) to 2-C-methyl-D-erythritol 2,4-cyclodiphosphate (ME-CPP) with a corresponding release of cytidine 5-monophosphate (CMP) (IspF). The sequence is that of Bifunctional enzyme IspD/IspF from Ruegeria pomeroyi (strain ATCC 700808 / DSM 15171 / DSS-3) (Silicibacter pomeroyi).